An 82-amino-acid polypeptide reads, in one-letter code: Opistoporin-1 (82 aa).

Positions 1 to 22 are cleaved as a signal peptide; sequence MNRKLLFVTLMVTMLVMQPSEG. The propeptide occupies 67–82; it reads EAGQMPFDEFMDILYE.

Expressed by the venom gland.

The protein localises to the secreted. It is found in the target cell membrane. In terms of biological role, at high concentrations, acts as a pore former in cellular membranes and causes the leakage of the cells. At submicromolar concentrations, degranulates granulocytes and has a weak hemolytic activity against human erythrocytes. Also strongly inhibits the production of superoxide anions. Has a strong antibacterial activity against Gram-negative bacteria but is less active against Gram-positive bacteria. Also has antifungal activity. This Opistophthalmus carinatus (African yellow leg scorpion) protein is Opistoporin-1.